The sequence spans 83 residues: Tetracenomycin polyketide synthase acyl carrier protein (83 aa).

The Carrier domain maps to 3–83 (QIGLPRLVEI…VNTETAGEVA (81 aa)). Serine 41 carries the O-(pantetheine 4'-phosphoryl)serine modification.

The tetracenomycin polyketide synthase (TCM PKS) is composed of a ketosynthase complex (TcmKL), an acyl carrier protein (TcmM), a cyclase (TcmN) and a probable second cyclase (TcmJ). It depends on pantetheine 4'-phosphate as a cofactor. Post-translationally, 4'-phosphopantetheine is transferred from CoA to a specific serine of apo-ACP.

It catalyses the reaction 10 malonyl-CoA + 8 H(+) = tetracenomycin F2 + 10 CO2 + 10 CoA + 2 H2O. It functions in the pathway antibiotic biosynthesis; tetracenomycin C biosynthesis. Its function is as follows. Involved in the biosynthesis of tetracenomycin C (TCM C). Part of a type II polyketide synthase (PKS) that catalyzes the synthesis of tetracenomycin F2 (TCM F2), a precursor of TCM C, from malonyl-CoA. TcmM is an acyl carrier protein that serves as an acceptor of malonate from malonyl-CoA and acts as the tether for the substrates and intermediates of polyketide assembly. The malonyl CoA-acyl carrier protein transacylase FabD (MCT) is required to catalyze the transacylation between malonyl-CoA and TcmM, although a relatively slow spontaneous self-malonylation of TcmM also occurs in a reaction without the MCT. The chain is Tetracenomycin polyketide synthase acyl carrier protein from Streptomyces glaucescens.